The sequence spans 401 residues: Dual specificity mitogen-activated protein kinase kinase 2 (401 aa).

Met-1 carries the post-translational modification N-acetylmethionine. A Phosphoserine modification is found at Ser-23. One can recognise a Protein kinase domain in the interval 72–370; that stretch reads FERISELGAG…LKLLMNHAFI (299 aa). ATP contacts are provided by residues 78-86 and Lys-101; that span reads LGAGNGGVV. Asp-194 serves as the catalytic Proton acceptor. 2 positions are modified to phosphoserine; by RAF: Ser-222 and Ser-226. A disordered region spans residues 282–310; that stretch reads PVVDGADGEPHSVSPRPRPPGRPISVGHG. 3 positions are modified to phosphoserine: Ser-293, Ser-295, and Ser-306. Thr-395 and Thr-397 each carry phosphothreonine.

This sequence belongs to the protein kinase superfamily. STE Ser/Thr protein kinase family. MAP kinase kinase subfamily. As to quaternary structure, interacts with MORG1. Interacts with SGK1. Interacts with KSR1. Interacts with KSR1 and BRAF; the interaction with KSR1 mediates KSR1-BRAF dimerization. Interacts with GLS. The cofactor is Mg(2+). Phosphorylation on Ser/Thr by MAP kinase kinase kinases (RAF or MEKK1) positively regulates the kinase activity. Phosphorylated by MAP2K1/MEK1. Low levels of autophosphorylation have been observed. In terms of tissue distribution, expressed in adult intestine, kidney, liver, lung, pancreas, spleen, thymus, and at high levels in the neonatal brain. Lower expression is found in adult brain and heart.

The protein resides in the cytoplasm. The protein localises to the membrane. The enzyme catalyses L-seryl-[protein] + ATP = O-phospho-L-seryl-[protein] + ADP + H(+). The catalysed reaction is L-threonyl-[protein] + ATP = O-phospho-L-threonyl-[protein] + ADP + H(+). It carries out the reaction L-tyrosyl-[protein] + ATP = O-phospho-L-tyrosyl-[protein] + ADP + H(+). Its activity is regulated as follows. Inhibited by serine/threonine phosphatase 2A. In terms of biological role, catalyzes the concomitant phosphorylation of a threonine and a tyrosine residue in a Thr-Glu-Tyr sequence located in MAP kinases. Activates the ERK1 and ERK2 MAP kinases. Activates BRAF in a KSR1 or KSR2-dependent manner; by binding to KSR1 or KSR2 releases the inhibitory intramolecular interaction between KSR1 or KSR2 protein kinase and N-terminal domains which promotes KSR1 or KSR2-BRAF dimerization and BRAF activation. This Mus musculus (Mouse) protein is Dual specificity mitogen-activated protein kinase kinase 2 (Map2k2).